A 132-amino-acid polypeptide reads, in one-letter code: MAFDSTWKVDRSENYDKFMEKMGVNIVKRKLAAHDNLKLTITQEGNKFTVKESSTFRNIEVVFELGVTFNYNLADGTELRGTWSLEGNKLIGKFKRTDNGNELNTVREIIGDELVQTYVYEGVEAKRIFKKD.

An N-acetylalanine modification is found at alanine 2. Hexadecanoate-binding residues include tryptophan 83 and arginine 107. Tetradecanoate contacts are provided by tryptophan 83 and arginine 107.

It belongs to the calycin superfamily. Fatty-acid binding protein (FABP) family. In terms of tissue distribution, expressed in the small intestine and at much lower levels in the large intestine. Highest expression levels in the jejunum.

Its subcellular location is the cytoplasm. Functionally, FABPs are thought to play a role in the intracellular transport of long-chain fatty acids and their acyl-CoA esters. FABP2 is probably involved in triglyceride-rich lipoprotein synthesis. Binds saturated long-chain fatty acids with a high affinity, but binds with a lower affinity to unsaturated long-chain fatty acids. FABP2 may also help maintain energy homeostasis by functioning as a lipid sensor. This chain is Fatty acid-binding protein, intestinal (FABP2), found in Homo sapiens (Human).